A 780-amino-acid polypeptide reads, in one-letter code: Replication origin-binding protein (780 aa).

The Helicase ATP-binding domain maps to 39 to 195 (SFENVRQPIK…AAFKPDTQIA (157 aa)). 52 to 59 (AAMGSGKT) serves as a coordination point for ATP.

Belongs to the herpesviridae OriBP family.

In terms of biological role, probably involved in DNA replication. Binds the origin of replication (ori). This is Replication origin-binding protein (U73) from Human herpesvirus 6A (strain Uganda-1102) (HHV-6 variant A).